The following is a 374-amino-acid chain: Arf-GAP with dual PH domain-containing protein 1 (374 aa).

An Arf-GAP domain is found at 7–126; the sequence is RAVLELLQRP…EFIYPEKQEP (120 aa). The segment at 21-44 adopts a C4-type zinc-finger fold; the sequence is CADCGAPDPDWASYTLGVFICLSC. The residue at position 87 (Ser87) is a Phosphoserine; by PKC. PH domains are found at residues 129 to 230 and 252 to 356; these read AGYR…AARF and NYLK…KAVD. Lys272 carries the post-translational modification N6-acetyllysine. At Thr276 the chain carries Phosphothreonine; by PKC.

In terms of assembly, interacts with PRKCA, PRKCI and PRKCZ. Interacts with the N-terminal region of PRKD1. In terms of processing, phosphorylated by PRKCA, PRKCI, PRKCZ and PRKD1 in vitro. In terms of tissue distribution, expressed at highest levels in brain and at lower levels in peripheral blood leukocytes.

It localises to the nucleus. Its subcellular location is the cytoplasm. Functionally, GTPase-activating protein for the ADP ribosylation factor family. Binds phosphatidylinositol 3,4,5-trisphosphate (PtdInsP3) and inositol 1,3,4,5-tetrakisphosphate (InsP4). Regulates the incorporation of CD63 and CD9 into multivesicular bodies. This Homo sapiens (Human) protein is Arf-GAP with dual PH domain-containing protein 1 (ADAP1).